The chain runs to 219 residues: uncharacterized protein (219 aa).

One can recognise an RRM domain in the interval 30 to 107 (FRLFVGNLGN…RPVKLSRATS (78 aa)). Residues 140–149 (KKIKNKHGKN) are compositionally biased toward basic residues. The disordered stretch occupies residues 140–219 (KKIKNKHGKN…YSRASSFRRV (80 aa)). Over residues 150–169 (SSKSSRAAQSAAAELISSSS) the composition is skewed to low complexity. Polar residues predominate over residues 176–186 (ANSTSVPNAVN).

This is an uncharacterized protein from Schizosaccharomyces pombe (strain 972 / ATCC 24843) (Fission yeast).